A 249-amino-acid chain; its full sequence is Ubiquinone biosynthesis O-methyltransferase (249 aa).

S-adenosyl-L-methionine contacts are provided by arginine 41, glycine 72, aspartate 93, and methionine 136.

It belongs to the methyltransferase superfamily. UbiG/COQ3 family.

The catalysed reaction is a 3-demethylubiquinol + S-adenosyl-L-methionine = a ubiquinol + S-adenosyl-L-homocysteine + H(+). It catalyses the reaction a 3-(all-trans-polyprenyl)benzene-1,2-diol + S-adenosyl-L-methionine = a 2-methoxy-6-(all-trans-polyprenyl)phenol + S-adenosyl-L-homocysteine + H(+). Its pathway is cofactor biosynthesis; ubiquinone biosynthesis. O-methyltransferase that catalyzes the 2 O-methylation steps in the ubiquinone biosynthetic pathway. This chain is Ubiquinone biosynthesis O-methyltransferase, found in Methylobacterium sp. (strain 4-46).